The sequence spans 156 residues: Small ribosomal subunit protein uS7 (156 aa).

It belongs to the universal ribosomal protein uS7 family. In terms of assembly, part of the 30S ribosomal subunit. Contacts proteins S9 and S11.

One of the primary rRNA binding proteins, it binds directly to 16S rRNA where it nucleates assembly of the head domain of the 30S subunit. Is located at the subunit interface close to the decoding center, probably blocks exit of the E-site tRNA. This is Small ribosomal subunit protein uS7 from Aeromonas salmonicida (strain A449).